The following is a 474-amino-acid chain: 3-isopropylmalate dehydratase large subunit (474 aa).

[4Fe-4S] cluster-binding residues include Cys355, Cys415, and Cys418.

It belongs to the aconitase/IPM isomerase family. LeuC type 1 subfamily. As to quaternary structure, heterodimer of LeuC and LeuD. The cofactor is [4Fe-4S] cluster.

It carries out the reaction (2R,3S)-3-isopropylmalate = (2S)-2-isopropylmalate. The protein operates within amino-acid biosynthesis; L-leucine biosynthesis; L-leucine from 3-methyl-2-oxobutanoate: step 2/4. Its function is as follows. Catalyzes the isomerization between 2-isopropylmalate and 3-isopropylmalate, via the formation of 2-isopropylmaleate. The protein is 3-isopropylmalate dehydratase large subunit of Shewanella sp. (strain MR-4).